The primary structure comprises 348 residues: Protein RecA (348 aa).

66–73 (GPESSGKT) serves as a coordination point for ATP.

This sequence belongs to the RecA family.

It is found in the cytoplasm. In terms of biological role, can catalyze the hydrolysis of ATP in the presence of single-stranded DNA, the ATP-dependent uptake of single-stranded DNA by duplex DNA, and the ATP-dependent hybridization of homologous single-stranded DNAs. It interacts with LexA causing its activation and leading to its autocatalytic cleavage. The sequence is that of Protein RecA from Legionella pneumophila (strain Paris).